Consider the following 248-residue polypeptide: Transcription termination/antitermination protein NusG (248 aa).

The region spanning 197-227 is the KOW domain; the sequence is KGDQVRVIEGPFMNFTGTVEEVHPEKRKLTV.

This sequence belongs to the NusG family. As to quaternary structure, monomer. Homodimer.

Its function is as follows. Participates in transcription elongation, termination and antitermination. The sequence is that of Transcription termination/antitermination protein NusG from Aquifex aeolicus (strain VF5).